The chain runs to 70 residues: MKKGIHPNYVEITATCSCGNVIKTHSTVGHDLNLDVCGKCHPFFTGKQRVVDTGGRVERFNKRFSIPGSK.

Positions 16, 18, 37, and 40 each coordinate Zn(2+).

It belongs to the bacterial ribosomal protein bL31 family. Type A subfamily. In terms of assembly, part of the 50S ribosomal subunit. It depends on Zn(2+) as a cofactor.

Its function is as follows. Binds the 23S rRNA. The chain is Large ribosomal subunit protein bL31 from Salmonella agona (strain SL483).